A 363-amino-acid chain; its full sequence is S-adenosylmethionine:tRNA ribosyltransferase-isomerase (363 aa).

This sequence belongs to the QueA family. Monomer.

It localises to the cytoplasm. The enzyme catalyses 7-aminomethyl-7-carbaguanosine(34) in tRNA + S-adenosyl-L-methionine = epoxyqueuosine(34) in tRNA + adenine + L-methionine + 2 H(+). It functions in the pathway tRNA modification; tRNA-queuosine biosynthesis. Functionally, transfers and isomerizes the ribose moiety from AdoMet to the 7-aminomethyl group of 7-deazaguanine (preQ1-tRNA) to give epoxyqueuosine (oQ-tRNA). This chain is S-adenosylmethionine:tRNA ribosyltransferase-isomerase, found in Haemophilus influenzae (strain ATCC 51907 / DSM 11121 / KW20 / Rd).